Here is a 172-residue protein sequence, read N- to C-terminus: Cytidylate kinase (172 aa).

4 to 12 (GPPGSGKST) serves as a coordination point for ATP.

The protein belongs to the cytidylate kinase family. Type 2 subfamily.

The protein resides in the cytoplasm. The enzyme catalyses CMP + ATP = CDP + ADP. It catalyses the reaction dCMP + ATP = dCDP + ADP. In Aeropyrum pernix (strain ATCC 700893 / DSM 11879 / JCM 9820 / NBRC 100138 / K1), this protein is Cytidylate kinase (cmk).